We begin with the raw amino-acid sequence, 210 residues long: Urease accessory protein UreG (210 aa).

14–21 (GPVGSGKT) is a binding site for GTP.

Belongs to the SIMIBI class G3E GTPase family. UreG subfamily. As to quaternary structure, homodimer. UreD, UreF and UreG form a complex that acts as a GTP-hydrolysis-dependent molecular chaperone, activating the urease apoprotein by helping to assemble the nickel containing metallocenter of UreC. The UreE protein probably delivers the nickel.

Its subcellular location is the cytoplasm. Functionally, facilitates the functional incorporation of the urease nickel metallocenter. This process requires GTP hydrolysis, probably effectuated by UreG. The polypeptide is Urease accessory protein UreG (Rhodopseudomonas palustris (strain BisA53)).